The chain runs to 214 residues: Ribosomal protein uL16-like (214 aa).

Belongs to the universal ribosomal protein uL16 family. Component of a male germ cell-specific 60S large ribosomal subunit (LSU), which contains RPL10L and RPL39L, instead of RPL10 and RPL39 paralogs. The composition of the rest of the complex is similar to classical ribosomes. As to expression, almost testis-specific. Also expressed in pre- and postmenopausal ovary.

It localises to the cytoplasm. Testis-specific component of the ribosome, which is required for the transition from prophase to metaphase in male meiosis I. Compensates for the inactivated X-linked RPL10 paralog during spermatogenesis. The ribosome is a large ribonucleoprotein complex responsible for the synthesis of proteins in the cell. The male germ cell-specific ribosome displays a ribosomal polypeptide exit tunnel of distinct size and charge states compared with the classical ribosome. It is responsible for regulating the biosynthesis and folding of a subset of male germ-cell-specific proteins that are essential for the formation of sperm. The polypeptide is Ribosomal protein uL16-like (Homo sapiens (Human)).